We begin with the raw amino-acid sequence, 359 residues long: Ornithine carbamoyltransferase, mitochondrial (359 aa).

The transit peptide at 1-24 (MASLRSVLKSQSLRHTVRSYSSQT) directs the protein to the mitochondrion. Residues 87-90 (STRT), Arg138, His165, and Gln168 contribute to the carbamoyl phosphate site. Residues Asn205, Asp271, Ser275, and Met276 each coordinate L-ornithine. The active-site Proton acceptor is Cys313. Carbamoyl phosphate-binding positions include 313–314 (CL) and Arg340.

The protein belongs to the aspartate/ornithine carbamoyltransferase superfamily. OTCase family. Homotrimer.

It is found in the mitochondrion matrix. It carries out the reaction carbamoyl phosphate + L-ornithine = L-citrulline + phosphate + H(+). It functions in the pathway amino-acid biosynthesis; L-arginine biosynthesis; L-arginine from L-ornithine and carbamoyl phosphate: step 1/3. This Emericella nidulans (strain FGSC A4 / ATCC 38163 / CBS 112.46 / NRRL 194 / M139) (Aspergillus nidulans) protein is Ornithine carbamoyltransferase, mitochondrial (argB).